The following is a 195-amino-acid chain: Imidazoleglycerol-phosphate dehydratase (195 aa).

Belongs to the imidazoleglycerol-phosphate dehydratase family.

It localises to the cytoplasm. The enzyme catalyses D-erythro-1-(imidazol-4-yl)glycerol 3-phosphate = 3-(imidazol-4-yl)-2-oxopropyl phosphate + H2O. The protein operates within amino-acid biosynthesis; L-histidine biosynthesis; L-histidine from 5-phospho-alpha-D-ribose 1-diphosphate: step 6/9. The chain is Imidazoleglycerol-phosphate dehydratase from Pelobacter propionicus (strain DSM 2379 / NBRC 103807 / OttBd1).